A 326-amino-acid polypeptide reads, in one-letter code: Trans-L-3-hydroxyproline dehydratase (326 aa).

The active-site Proton acceptor is C80. Residues 81–82, D241, and 246–247 each bind substrate; these read GH and GS.

Belongs to the proline racemase family. In terms of assembly, homodimer.

The catalysed reaction is trans-3-hydroxy-L-proline = 1-pyrroline-2-carboxylate + H2O. Its function is as follows. Catalyzes the dehydration of trans-3-hydroxy-L-proline to delta-1-pyrroline-2-carboxylate (Pyr2C). The protein is Trans-L-3-hydroxyproline dehydratase (l3hypdh) of Saccoglossus kowalevskii (Acorn worm).